Here is a 680-residue protein sequence, read N- to C-terminus: DNA-directed RNA polymerase subunit beta' (680 aa).

C69, C71, C87, and C90 together coordinate Zn(2+). The Mg(2+) site is built by D489, D491, and D493.

The protein belongs to the RNA polymerase beta' chain family. RpoC1 subfamily. As to quaternary structure, in plastids the minimal PEP RNA polymerase catalytic core is composed of four subunits: alpha, beta, beta', and beta''. When a (nuclear-encoded) sigma factor is associated with the core the holoenzyme is formed, which can initiate transcription. Requires Mg(2+) as cofactor. It depends on Zn(2+) as a cofactor.

It localises to the plastid. The protein resides in the chloroplast. The catalysed reaction is RNA(n) + a ribonucleoside 5'-triphosphate = RNA(n+1) + diphosphate. DNA-dependent RNA polymerase catalyzes the transcription of DNA into RNA using the four ribonucleoside triphosphates as substrates. This is DNA-directed RNA polymerase subunit beta' from Citrus sinensis (Sweet orange).